Reading from the N-terminus, the 632-residue chain is Phosphoglucomutase, chloroplastic (632 aa).

A chloroplast-targeting transit peptide spans 1–72 (MAMESALTST…PSSPSTSVAQ (72 aa)). 2 residues coordinate alpha-D-glucose 1,6-bisphosphate: R97 and S190. Catalysis depends on S190, which acts as the Phosphoserine intermediate. Mg(2+) contacts are provided by S190, D355, D357, and D359. At S190 the chain carries Phosphoserine. The alpha-D-glucose 1,6-bisphosphate site is built by D359, R360, T423, E442, S444, and K455.

It belongs to the phosphohexose mutase family. In terms of assembly, monomer. Mg(2+) serves as cofactor.

It is found in the plastid. It localises to the chloroplast. The catalysed reaction is alpha-D-glucose 1-phosphate = alpha-D-glucose 6-phosphate. It catalyses the reaction O-phospho-L-seryl-[protein] + alpha-D-glucose 1-phosphate = alpha-D-glucose 1,6-bisphosphate + L-seryl-[protein]. The enzyme catalyses alpha-D-glucose 1,6-bisphosphate + L-seryl-[protein] = O-phospho-L-seryl-[protein] + alpha-D-glucose 6-phosphate. Inhibited by the Calvin cycle intermediates fructose-1,6-bisphosphate and ribulose-1,5-bisphosphate. In terms of biological role, catalyzes the reversible isomerization of alpha-D-glucose 1-phosphate to alpha-D-glucose 6-phosphate. The mechanism proceeds via the intermediate compound alpha-D-glucose 1,6-bisphosphate. This enzyme participates in both the breakdown and synthesis of glucose. Promotes gravitropic responses, negative in shoots but positive in roots, by facilitating starch granules (statoliths) formation. The chain is Phosphoglucomutase, chloroplastic (PGMP) from Solanum tuberosum (Potato).